A 112-amino-acid polypeptide reads, in one-letter code: MLSATCRRLAPALRRLRALSAVAGRFLQVPGARLCSDQSERAEQPHTFHPALLQFLVCPLSKKPLRYEASTNELVNEELGIAYPIIDGIPNMIPQAARTTRQNEKQEEAEQP.

The N-terminal 34 residues, 1–34 (MLSATCRRLAPALRRLRALSAVAGRFLQVPGARL), are a transit peptide targeting the mitochondrion. Residues 49-95 (HPALLQFLVCPLSKKPLRYEASTNELVNEELGIAYPIIDGIPNMIPQ) form the TRM112 domain.

The protein belongs to the PREY family. Interacts (via TRM112 domain) with NDUFAF5; the interaction is direct and stabilizes NDUFAF5 protein. Interacts with COQ5; the interaction is direct, stabilizes COQ5 protein and associates PYURF with COQ enzyme complex.

The protein localises to the mitochondrion. In mitochondria, S-adenosylmethionine-dependent methyltransferase chaperone that supports both coenzyme Q biosynthesis, by stabilizing its components, such as COQ5, and NADH:ubiquinone oxidoreductase complex (complex I, MT-ND1) assembly, by stabilizing complex I assembly factors, such as NDUFAF5. This chain is Protein preY, mitochondrial (Pyurf), found in Mus musculus (Mouse).